We begin with the raw amino-acid sequence, 308 residues long: Baculoviral IAP repeat-containing protein bir-2 (308 aa).

BIR repeat units follow at residues 27–98 and 170–241; these read RFAS…EFVM and RLAT…DFIK. 8 residues coordinate Zn(2+): Cys68, Cys71, His87, Cys94, Cys211, Cys214, His230, and Cys237.

The protein belongs to the IAP family.

The protein is Baculoviral IAP repeat-containing protein bir-2 of Caenorhabditis elegans.